We begin with the raw amino-acid sequence, 262 residues long: Matrilysin (262 aa).

Residues 1 to 12 form the signal peptide; sequence LCVLCLLPQSPA. A propeptide spans 13–89 (activation peptide); that stretch reads LPLPREAGGH…PRCGLPDTGE (77 aa). Residues 80–87 carry the Cysteine switch motif; that stretch reads PRCGLPDT. Cysteine 82 is a binding site for Zn(2+). Ca(2+) is bound at residue aspartate 148. 2 residues coordinate Zn(2+): histidine 158 and aspartate 160. Ca(2+)-binding residues include aspartate 165, glycine 166, glycine 168, and threonine 170. Histidine 173 provides a ligand contact to Zn(2+). Glycine 180, glycine 182, and aspartate 184 together coordinate Ca(2+). A Zn(2+)-binding site is contributed by histidine 186. Residues aspartate 188 and glutamate 191 each contribute to the Ca(2+) site. A Zn(2+)-binding site is contributed by histidine 209. Residue glutamate 210 is part of the active site. Zn(2+) contacts are provided by histidine 213 and histidine 219.

Belongs to the peptidase M10A family. Ca(2+) is required as a cofactor. The cofactor is Zn(2+).

It localises to the secreted. The protein localises to the extracellular space. Its subcellular location is the extracellular matrix. It carries out the reaction Cleavage of 14-Ala-|-Leu-15 and 16-Tyr-|-Leu-17 in B chain of insulin. No action on collagen types I, II, IV, V. Cleaves gelatin chain alpha2(I) &gt; alpha1(I).. Its function is as follows. Degrades casein, gelatins of types I, III, IV, and V, and fibronectin. Activates procollagenase. This Felis catus (Cat) protein is Matrilysin (MMP7).